A 149-amino-acid chain; its full sequence is Calmodulin-1 (149 aa).

A2 is modified (N-acetylalanine). 4 EF-hand domains span residues 8-43 (DQIA…LGQN), 44-79 (PTEA…KMKD), 81-116 (DSEE…LGEK), and 117-149 (LTDE…MMAK). Residues D21, D23, D25, C27, E32, D57, D59, N61, T63, E68, D94, D96, N98, and E105 each coordinate Ca(2+). K116 bears the N6,N6,N6-trimethyllysine mark. Ca(2+) contacts are provided by D130, D132, D134, Q136, and E141.

It belongs to the calmodulin family.

Functionally, calmodulin mediates the control of a large number of enzymes, ion channels and other proteins by Ca(2+). Among the enzymes to be stimulated by the calmodulin-Ca(2+) complex are a number of protein kinases and phosphatases. The protein is Calmodulin-1 (CAM1-1) of Oryza sativa subsp. indica (Rice).